A 932-amino-acid polypeptide reads, in one-letter code: Protocadherin gamma-A6 (932 aa).

Positions 1-29 (MAPPQRHPQRSEQVLLLTLLGTLWGAAAA) are cleaved as a signal peptide. Cadherin domains lie at 30-133 (QIRY…TPRF), 134-242 (LKEE…TPMF), 243-347 (TQPV…VPEV), 348-452 (VVTS…PPTF), 453-562 (PHSS…APEI), and 570-682 (DGST…EPSA). The Extracellular portion of the chain corresponds to 30-692 (QIRYSIPEEL…KPNDSDLTLY (663 aa)). N81 carries an N-linked (GlcNAc...) asparagine glycan. N-linked (GlcNAc...) asparagine glycans are attached at residues N419 and N545. N-linked (GlcNAc...) asparagine glycosylation is present at N685. The helical transmembrane segment at 693-713 (LVVAVAAVSCVFLAFVIVLLA) threads the bilayer. Residues 714–932 (LRLQRWHKSR…KKKSGKKEKK (219 aa)) are Cytoplasmic-facing. Disordered stretches follow at residues 804-841 (PRQL…WPNN) and 902-932 (ATLT…KEKK). Over residues 806-841 (QLQQAPPNTDWRFSQAQRPGTSGSQNGDDTGTWPNN) the composition is skewed to polar residues. Basic residues predominate over residues 922–932 (NKKKSGKKEKK).

The protein resides in the cell membrane. Functionally, potential calcium-dependent cell-adhesion protein. May be involved in the establishment and maintenance of specific neuronal connections in the brain. The chain is Protocadherin gamma-A6 (PCDHGA6) from Homo sapiens (Human).